We begin with the raw amino-acid sequence, 515 residues long: Hopanoid C-3 methylase (515 aa).

A B12-binding domain is found at 8-141; that stretch reads PSPLMYTKVF…ETLARRGNID (134 aa). The region spanning 181 to 395 is the Radical SAM core domain; the sequence is GTLDPCASIE…DIQHAVLPTR (215 aa). Positions 195, 199, and 202 each coordinate [4Fe-4S] cluster.

The protein belongs to the radical SAM superfamily. It depends on [4Fe-4S] cluster as a cofactor.

In terms of biological role, required for methylation of hopanoids at the C-3 position. The chain is Hopanoid C-3 methylase from Methylococcus capsulatus (strain ATCC 33009 / NCIMB 11132 / Bath).